Reading from the N-terminus, the 775-residue chain is MDCRTKANPDRTFDLVLKVKCHASENEDPVVLWKFPEDFGDQEILQSVPKFCFPFDVERVSQNQVGQHFTFVLTDIESKQRFGFCRLTSGGTICLCILSYLPWFEVYYKLLNTLADYLAKELENDLNETLRSLYNHPVPKANTPVNLSVNQEIFIACEQVLKDQPALVPHSYFIAPDVTGLPTIPESRNLTEYFVAVDVNNMLQLYASMLHERRIVIISSKLSTLTACIHGSAALLYPMYWQHIYIPVLPPHLLDYCCAPMPYLIGIHSSLIERVKNKSLEDVVMLNVDTNTLESPFSDLNNLPSDVVSALKNKLKKQSTATGDGVARAFLRAQAALFGSYRDALRYKPGEPITFCEESFVKHRSSVMKQFLETAINLQLFKQFIDGRLAKLNAGRGFSDVFEEEITSGGFCGGNPRSYQQWVHTVKKGGALFNTAMTKATPAVRTAYKFAKNHAKLGLKEVKSKLKHKENEEDYGTCSSSVQYTPVYKLHNEKGGNSEKRKLAQARLKRPLKSLDGALYDDEDDDDIERASKLSSEDGEEASAYLYESDDSVETRVKTPYSGEMDLLGEILDTLSTHSSDQGKLAAAKSLDFFRSMDDIDYKPTNKSNAPSENNLAFLCGGSGDQAEWNLGQDDSALHGKHLPPSPRKRVSSSGLTDSLFILKEENSNKHLGADNVSDPTSGLDFQLTSPEVSQTDKGKTEKRETLSQISDDLLIPGLGRHSSTFVPWEKEGKEAKETSEDIGLLHEVVSLCHMTSDFQQSLNISDKNTNGNQT.

Residues 14–143 form the uDENN domain; it reads DLVLKVKCHA…YNHPVPKANT (130 aa). The cDENN domain occupies 180–316; sequence GLPTIPESRN…VVSALKNKLK (137 aa). The 78-residue stretch at 318 to 395 folds into the dDENN domain; the sequence is QSTATGDGVA…DGRLAKLNAG (78 aa). An FXDXF motif motif is present at residues 398 to 402; sequence FSDVF. Tyr-520 is subject to Phosphotyrosine. Ser-535, Ser-536, Ser-549, and Ser-552 each carry phosphoserine. Positions 566 to 575 match the Clathrin box motif; sequence DLLGEILDTL. Disordered stretches follow at residues 635 to 654 and 671 to 706; these read DSAL…VSSS and HLGA…KRET. Positions 639-651 are enriched in basic residues; that stretch reads HGKHLPPSPRKRV. Ser-652 and Ser-653 each carry phosphoserine. Over residues 695–706 the composition is skewed to basic and acidic residues; sequence QTDKGKTEKRET.

As to quaternary structure, interacts with RAB35. Interacts with clathrin heavy chain/CLTC. Interacts with components of the adapter protein complex 2 (AP-2) AP2A2 and AP2B1. Interacts with CD3E. Phosphorylated on serine and/or threonine, possibly regulating the guanine nucleotide exchange factor (GEF) activity. As to expression, highly expressed in dendritic and natural killer cells and at lower levels in other myeloid lineage cells and in pituitary. Significantly up-regulated in effector memory T-cells as compared with naive T-cells.

Its subcellular location is the cytoplasm. It is found in the cytosol. It localises to the cytoplasmic vesicle. The protein localises to the clathrin-coated vesicle. Functionally, guanine nucleotide exchange factor (GEF) for RAB35 that acts as a regulator of T-cell receptor (TCR) internalization in TH2 cells. Acts by promoting the exchange of GDP to GTP, converting inactive GDP-bound RAB35 into its active GTP-bound form. Plays a role in clathrin-mediated endocytosis. Controls cytokine production in TH2 lymphocytes by controlling the rate of TCR internalization and routing to endosomes: acts by mediating clathrin-mediated endocytosis of TCR via its interaction with the adapter protein complex 2 (AP-2) and GEF activity. Dysregulation leads to impaired TCR down-modulation and recycling, affecting cytokine production in TH2 cells. This is DENN domain-containing protein 1B from Homo sapiens (Human).